A 160-amino-acid chain; its full sequence is SsrA-binding protein (160 aa).

The protein belongs to the SmpB family.

It is found in the cytoplasm. Its function is as follows. Required for rescue of stalled ribosomes mediated by trans-translation. Binds to transfer-messenger RNA (tmRNA), required for stable association of tmRNA with ribosomes. tmRNA and SmpB together mimic tRNA shape, replacing the anticodon stem-loop with SmpB. tmRNA is encoded by the ssrA gene; the 2 termini fold to resemble tRNA(Ala) and it encodes a 'tag peptide', a short internal open reading frame. During trans-translation Ala-aminoacylated tmRNA acts like a tRNA, entering the A-site of stalled ribosomes, displacing the stalled mRNA. The ribosome then switches to translate the ORF on the tmRNA; the nascent peptide is terminated with the 'tag peptide' encoded by the tmRNA and targeted for degradation. The ribosome is freed to recommence translation, which seems to be the essential function of trans-translation. This is SsrA-binding protein from Yersinia enterocolitica serotype O:8 / biotype 1B (strain NCTC 13174 / 8081).